The primary structure comprises 188 residues: Elongation factor P (188 aa).

This sequence belongs to the elongation factor P family.

The protein resides in the cytoplasm. Its pathway is protein biosynthesis; polypeptide chain elongation. Functionally, involved in peptide bond synthesis. Stimulates efficient translation and peptide-bond synthesis on native or reconstituted 70S ribosomes in vitro. Probably functions indirectly by altering the affinity of the ribosome for aminoacyl-tRNA, thus increasing their reactivity as acceptors for peptidyl transferase. In Rhodospirillum centenum (strain ATCC 51521 / SW), this protein is Elongation factor P.